Reading from the N-terminus, the 308-residue chain is ADP-L-glycero-D-manno-heptose-6-epimerase (308 aa).

Residues Phe10–Ile11, Asp31–Asn32, Lys38, Lys53, Glu75–Ser79, and Asn92 contribute to the NADP(+) site. Tyr139 (proton acceptor) is an active-site residue. Position 143 (Lys143) interacts with NADP(+). Asn168 contributes to the substrate binding site. The NADP(+) site is built by Val169 and Lys177. Catalysis depends on Lys177, which acts as the Proton acceptor. Substrate-binding positions include Ser179, His186, Phe200–Ser203, Arg208, and Tyr271.

This sequence belongs to the NAD(P)-dependent epimerase/dehydratase family. HldD subfamily. In terms of assembly, homopentamer. Requires NADP(+) as cofactor.

The catalysed reaction is ADP-D-glycero-beta-D-manno-heptose = ADP-L-glycero-beta-D-manno-heptose. It participates in nucleotide-sugar biosynthesis; ADP-L-glycero-beta-D-manno-heptose biosynthesis; ADP-L-glycero-beta-D-manno-heptose from D-glycero-beta-D-manno-heptose 7-phosphate: step 4/4. The protein operates within bacterial outer membrane biogenesis; LOS core biosynthesis. Its function is as follows. Catalyzes the interconversion between ADP-D-glycero-beta-D-manno-heptose and ADP-L-glycero-beta-D-manno-heptose via an epimerization at carbon 6 of the heptose. The chain is ADP-L-glycero-D-manno-heptose-6-epimerase from Haemophilus influenzae (strain ATCC 51907 / DSM 11121 / KW20 / Rd).